A 161-amino-acid chain; its full sequence is Dermonecrotic toxin LarSicTox-alphaI-1 (161 aa).

This sequence belongs to the arthropod phospholipase D family. Class II subfamily. The cofactor is Mg(2+). Post-translationally, contains 2 disulfide bonds. Expressed by the venom gland.

It is found in the secreted. It catalyses the reaction an N-(acyl)-sphingosylphosphocholine = an N-(acyl)-sphingosyl-1,3-cyclic phosphate + choline. The catalysed reaction is an N-(acyl)-sphingosylphosphoethanolamine = an N-(acyl)-sphingosyl-1,3-cyclic phosphate + ethanolamine. The enzyme catalyses a 1-acyl-sn-glycero-3-phosphocholine = a 1-acyl-sn-glycero-2,3-cyclic phosphate + choline. It carries out the reaction a 1-acyl-sn-glycero-3-phosphoethanolamine = a 1-acyl-sn-glycero-2,3-cyclic phosphate + ethanolamine. In terms of biological role, dermonecrotic toxins cleave the phosphodiester linkage between the phosphate and headgroup of certain phospholipids (sphingolipid and lysolipid substrates), forming an alcohol (often choline) and a cyclic phosphate. This toxin acts on sphingomyelin (SM). It may also act on ceramide phosphoethanolamine (CPE), lysophosphatidylcholine (LPC) and lysophosphatidylethanolamine (LPE), but not on lysophosphatidylserine (LPS), and lysophosphatidylglycerol (LPG). It acts by transphosphatidylation, releasing exclusively cyclic phosphate products as second products. Induces dermonecrosis, hemolysis, increased vascular permeability, edema, inflammatory response, and platelet aggregation. The polypeptide is Dermonecrotic toxin LarSicTox-alphaI-1 (Loxosceles arizonica (Arizona brown spider)).